The following is a 219-amino-acid chain: Putative GEM-like protein 8 (219 aa).

Residues Lys-96–Gln-174 form the GRAM domain.

Belongs to the GEM family.

The polypeptide is Putative GEM-like protein 8 (Arabidopsis thaliana (Mouse-ear cress)).